Consider the following 875-residue polypeptide: F-box only protein 41 (875 aa).

Disordered stretches follow at residues Glu-85–His-110, Ser-165–Ala-194, and Ser-347–Ser-542. A compositionally biased stretch (pro residues) spans Thr-170–Gly-182. Over residues Pro-183–Ala-194 the composition is skewed to low complexity. Positions Ala-209 to Gly-351 form a coiled coil. Positions Ser-347–Ala-356 are enriched in polar residues. Residues Gly-359–Gly-368 are compositionally biased toward gly residues. At Arg-360 the chain carries Omega-N-methylarginine. Residues His-395–Cys-416 are compositionally biased toward polar residues. Ser-478 bears the Phosphoserine mark. At Thr-479 the chain carries Phosphothreonine. Positions Ser-496 to Ser-540 constitute an F-box domain. Ser-762 is subject to Phosphoserine.

In terms of assembly, directly interacts with SKP1 and CUL1.

Substrate-recognition component of the SCF (SKP1-CUL1-F-box protein)-type E3 ubiquitin ligase complex. The polypeptide is F-box only protein 41 (FBXO41) (Homo sapiens (Human)).